We begin with the raw amino-acid sequence, 239 residues long: uncharacterized protein (239 aa).

This is an uncharacterized protein from Bacillus subtilis (strain 168).